A 211-amino-acid polypeptide reads, in one-letter code: MMFSFIVHVFISLFAVSNPIGNVPIFLTLTEGYTAAERKAIARKAAILSFFILAAFLVFGHLIFKLFDINIHALRVAGGIFIFGIAYNLLNAKESHVQSLHHDEHKESKEKADISVTPLSIPIIAGPGTIATVMSLSAGHSGIGHYAAVMIGIAAVIALTFLFFHYSAFISSKLGKTEMNVITRLMGLILAVVAVGMIGAGLKGMFPVLTS.

6 helical membrane-spanning segments follow: residues 1–21, 47–67, 69–89, 114–134, 150–170, and 188–208; these read MMFS…NPIG, ILSF…FKLF, INIH…AYNL, ISVT…ATVM, MIGI…SAFI, and LILA…MFPV.

This sequence belongs to the UPF0056 (MarC) family.

The protein resides in the cell membrane. This chain is UPF0056 membrane protein YvbG (yvbG), found in Bacillus subtilis (strain 168).